Consider the following 260-residue polypeptide: Activator of 90 kDa heat shock protein ATPase homolog 2 (260 aa).

The protein belongs to the AHA1 family.

In terms of biological role, co-chaperone that stimulates HSP90 ATPase activity. This chain is Activator of 90 kDa heat shock protein ATPase homolog 2 (AHSA2), found in Bos taurus (Bovine).